The following is a 358-amino-acid chain: Popeye domain-containing protein 1 (358 aa).

The Extracellular segment spans residues 1-48; the sequence is MNSTESIPLAQSTVAGFTSELESLTPVPSNETTCENWREIHHLVFHVA. Residues N2 and N30 are each glycosylated (N-linked (GlcNAc...) asparagine). The helical transmembrane segment at 49-69 threads the bilayer; it reads NVCFAVGLLIPTTLHLHMILL. Residue R70 is a topological domain, cytoplasmic. A helical membrane pass occupies residues 71 to 91; it reads VMLSLGCTLYVVWATLYRCAL. Position 92 (D92) is a topological domain, extracellular. Residues 93-113 traverse the membrane as a helical segment; the sequence is VMIWNSVFLGINILHLSYLLY. The segment at 93–115 is required for interaction with CAV3; that stretch reads VMIWNSVFLGINILHLSYLLYKK. Topologically, residues 114–358 are cytoplasmic; sequence KKRPVKIEKE…PDALKVHQLP (245 aa). The required for interaction with KCNK2 stretch occupies residues 136-186; it reads RVPPDLFRRLTGQFCMIQTLKRGQVYATEDKTSVDDRLSILLKGRMKVSYR. A phosphoserine mark is found at S295 and S318. Over residues 313 to 323 the composition is skewed to low complexity; sequence SSSTASLPMSS. Residues 313 to 350 are disordered; that stretch reads SSSTASLPMSSPQQRASAKMKPIEEGVEDDDEVFVSPD.

It belongs to the popeye family. In terms of assembly, homodimer. Homodimerization requires the C-terminus cytoplasmic region. Interacts (via the C-terminus cytoplasmic tail) with TJP1. Interacts (via the C-terminus cytoplasmic tail) with ARHGEF25/GEFT (via the DH domain). Interacts (via the C-terminus cytoplasmic tail) with VAMP3. Interacts with KCNK2; the interaction enhances KCNK2 surface expression and is inhibited by cAMP. Interacts with CAV3. In terms of tissue distribution, expressed in epithelial cells, skeletal muscle, heart and intestinal smooth muscle (at protein level). Expressed in fetal and adult heart and skeletal muscle.

The protein localises to the lateral cell membrane. Its subcellular location is the cell junction. It is found in the tight junction. The protein resides in the membrane. It localises to the cell membrane. The protein localises to the sarcolemma. Its subcellular location is the caveola. Cell adhesion molecule involved in the establishment and/or maintenance of cell integrity. Involved in the formation and regulation of the tight junction (TJ) paracellular permeability barrier in epithelial cells. Plays a role in VAMP3-mediated vesicular transport and recycling of different receptor molecules through its interaction with VAMP3. Plays a role in the regulation of cell shape and movement by modulating the Rho-family GTPase activity through its interaction with ARHGEF25/GEFT. Induces primordial adhesive contact and aggregation of epithelial cells in a Ca(2+)-independent manner. Also involved in striated muscle regeneration and repair and in the regulation of cell spreading. Important for the maintenance of cardiac function. Plays a regulatory function in heart rate dynamics mediated, at least in part, through cAMP-binding and, probably, by increasing cell surface expression of the potassium channel KCNK2 and enhancing current density. Is a caveolae-associated protein important for the preservation of caveolae structural and functional integrity as well as for heart protection against ischemia injury. This Mus musculus (Mouse) protein is Popeye domain-containing protein 1.